A 174-amino-acid chain; its full sequence is Ribosome maturation factor RimM (174 aa).

Residues 98-171 (EGEFYFHQII…TIHIEVMEGL (74 aa)) form the PRC barrel domain.

This sequence belongs to the RimM family. Binds ribosomal protein uS19.

The protein resides in the cytoplasm. In terms of biological role, an accessory protein needed during the final step in the assembly of 30S ribosomal subunit, possibly for assembly of the head region. Essential for efficient processing of 16S rRNA. May be needed both before and after RbfA during the maturation of 16S rRNA. It has affinity for free ribosomal 30S subunits but not for 70S ribosomes. The polypeptide is Ribosome maturation factor RimM (Bacillus pumilus (strain SAFR-032)).